The sequence spans 144 residues: UPF0102 protein sce2912 (144 aa).

The protein belongs to the UPF0102 family.

This Sorangium cellulosum (strain So ce56) (Polyangium cellulosum (strain So ce56)) protein is UPF0102 protein sce2912.